A 176-amino-acid polypeptide reads, in one-letter code: Salivary antigen 1 (176 aa).

An N-terminal signal peptide occupies residues 1–18; the sequence is MNYCFLVFLVYLVFAVNG.

Its subcellular location is the secreted. This Ctenocephalides felis (Cat flea) protein is Salivary antigen 1.